Consider the following 222-residue polypeptide: Kinetochore protein Spc25 (222 aa).

Residues 51-86 (RHQRKVGKLQKVLMERREELDKRVSFIEELDRELEA) are a coiled coil.

It belongs to the SPC25 family. As to quaternary structure, component of the Ndc80 complex, which is composed of Ndc80, Nuf2 and Spc25.

The protein resides in the nucleus. Its subcellular location is the chromosome. It localises to the centromere. It is found in the kinetochore. Its function is as follows. Acts as a component of the essential kinetochore-associated Ndc80 complex, which is required for chromosome segregation and spindle checkpoint activity during meiosis and mitosis. Required for kinetochore integrity and the organization of stable microtubule binding sites in the outer plate of the kinetochore. Participates in SAC signaling that responds specifically to disruptions in spindle microtubule dynamics. The NDC80 complex synergistically enhances the affinity of the SKA1 complex for microtubules and may allow the NDC80 complex to track depolymerizing microtubules. The polypeptide is Kinetochore protein Spc25 (Drosophila mauritiana (Fruit fly)).